A 155-amino-acid polypeptide reads, in one-letter code: uncharacterized protein (155 aa).

The first 23 residues, 1 to 23 (MRLMRNLMNALLLGAAASSLAVA), serve as a signal peptide directing secretion. Residues Cys-86 and Cys-91 are joined by a disulfide bond.

It belongs to the ivy family.

Its subcellular location is the periplasm. This is an uncharacterized protein from Pseudomonas aeruginosa (strain ATCC 15692 / DSM 22644 / CIP 104116 / JCM 14847 / LMG 12228 / 1C / PRS 101 / PAO1).